The sequence spans 309 residues: Homoserine kinase (309 aa).

ATP is bound at residue 95 to 105; sequence PHGRGLGSSSA.

This sequence belongs to the GHMP kinase family. Homoserine kinase subfamily.

Its subcellular location is the cytoplasm. It catalyses the reaction L-homoserine + ATP = O-phospho-L-homoserine + ADP + H(+). The protein operates within amino-acid biosynthesis; L-threonine biosynthesis; L-threonine from L-aspartate: step 4/5. Catalyzes the ATP-dependent phosphorylation of L-homoserine to L-homoserine phosphate. This chain is Homoserine kinase, found in Streptomyces coelicolor (strain ATCC BAA-471 / A3(2) / M145).